Consider the following 176-residue polypeptide: Peptidoglycan-associated lipoprotein (176 aa).

Residues 1-21 (MKAGSFYKLGLLVASAVLVAA) form the signal peptide. Residue cysteine 22 is the site of N-palmitoyl cysteine attachment. Cysteine 22 carries the S-diacylglycerol cysteine lipid modification. The 117-residue stretch at 60–176 (YTTQAPHNQL…RVEFIYEATR (117 aa)) folds into the OmpA-like domain.

The protein belongs to the Pal lipoprotein family. The Tol-Pal system is composed of five core proteins: the inner membrane proteins TolA, TolQ and TolR, the periplasmic protein TolB and the outer membrane protein Pal. They form a network linking the inner and outer membranes and the peptidoglycan layer.

The protein resides in the cell outer membrane. Its function is as follows. Part of the Tol-Pal system, which plays a role in outer membrane invagination during cell division and is important for maintaining outer membrane integrity. Very strongly associated with the peptidoglycan. This is Peptidoglycan-associated lipoprotein from Legionella pneumophila.